The chain runs to 907 residues: HMG box transcription factor BBX (907 aa).

Over residues 1–19 the composition is skewed to basic and acidic residues; the sequence is MKGSNRNKDHSTEGEGDGK. Disordered stretches follow at residues 1–24, 37–80, 152–185, and 220–242; these read MKGS…PKRK, LDFS…EQRA, TTNK…PTPK, and TPEA…RQKS. 2 stretches are compositionally biased toward acidic residues: residues 39–52 and 61–75; these read FSEE…EEDI and DGLE…DDES. A DNA-binding region (HMG box) is located at residues 80–148; sequence ARRPMNAFLL…AFMKANPGYR (69 aa). A compositionally biased stretch (polar residues) spans 152–164; sequence TTNKPVKSPTPTV. At Ser-242 the chain carries Phosphoserine. A Glycyl lysine isopeptide (Lys-Gly) (interchain with G-Cter in SUMO2) cross-link involves residue Lys-384. 3 disordered regions span residues 435 to 483, 495 to 612, and 628 to 672; these read IIED…DIES, DWGV…SERS, and TSLR…KKFK. The segment covering 447 to 457 has biased composition (basic residues); that stretch reads KIKKKKKKNKL. Phosphoserine occurs at positions 476 and 483. Composition is skewed to basic and acidic residues over residues 496–506 and 534–550; these read WGVDKLGETPR and KKVS…ESRP. Lys-571 is covalently cross-linked (Glycyl lysine isopeptide (Lys-Gly) (interchain with G-Cter in SUMO2)). Positions 591–612 are enriched in basic and acidic residues; it reads KPEDSDCHRKTETCGSRKSERS. Residues 656–668 are compositionally biased toward polar residues; that stretch reads ESWTFNQSGTSGS. Lys-693 is covalently cross-linked (Glycyl lysine isopeptide (Lys-Gly) (interchain with G-Cter in SUMO2)). The residue at position 701 (Ser-701) is a Phosphoserine. Disordered stretches follow at residues 708 to 736, 769 to 854, and 877 to 907; these read KCVS…SGDK, NALS…SSTP, and VHRG…CADQ. Residues 723–732 are compositionally biased toward low complexity; it reads SSESTKTSKG. A compositionally biased stretch (polar residues) spans 772-783; it reads SIPNTPEPTTMQ. The residue at position 789 (Ser-789) is a Phosphoserine. Positions 790 to 801 are enriched in basic residues; that stretch reads QKRKARKTKITH. Ser-811 carries the post-translational modification Phosphoserine.

It is found in the nucleus. In terms of biological role, transcription factor that is necessary for cell cycle progression from G1 to S phase. The sequence is that of HMG box transcription factor BBX (Bbx) from Mus musculus (Mouse).